Reading from the N-terminus, the 500-residue chain is L-arabinose isomerase (500 aa).

Mn(2+) contacts are provided by Glu306, Glu333, His350, and His450.

It belongs to the arabinose isomerase family. As to quaternary structure, homohexamer. Mn(2+) is required as a cofactor.

The enzyme catalyses beta-L-arabinopyranose = L-ribulose. Its pathway is carbohydrate degradation; L-arabinose degradation via L-ribulose; D-xylulose 5-phosphate from L-arabinose (bacterial route): step 1/3. In terms of biological role, catalyzes the conversion of L-arabinose to L-ribulose. The chain is L-arabinose isomerase from Escherichia coli O139:H28 (strain E24377A / ETEC).